Consider the following 528-residue polypeptide: Acid-sensing ion channel 1 (528 aa).

The Cytoplasmic segment spans residues 1 to 49; it reads MELKAEEEEVGGVQPVSIQAFASSSTLHGLAHIFSYERLSLKRALWALC. Residues 50-66 form a helical membrane-spanning segment; sequence FLGSLAVLLCVCTERVQ. Residues 67–427 lie on the Extracellular side of the membrane; that stretch reads YYFHYHHVTK…ETIEQKKAYE (361 aa). Disulfide bonds link Cys93/Cys194, Cys172/Cys179, Cys290/Cys367, Cys310/Cys363, Cys314/Cys361, Cys323/Cys345, and Cys325/Cys337. Asn368 and Asn395 each carry an N-linked (GlcNAc...) asparagine glycan. The discontinuously helical transmembrane segment at 428–458 threads the bilayer; it reads IAGLLGDIGGQMGLFIGASILTVLELFDYAY. The GAS motif; ion selectivity filter motif lies at 444–446; the sequence is GAS. Topologically, residues 459–528 are cytoplasmic; that stretch reads EVIKHKLCRR…ARGTFEDFTC (70 aa). The residue at position 479 (Ser479) is a Phosphoserine; by PKA. Ser499 carries the phosphoserine modification.

The protein belongs to the amiloride-sensitive sodium channel (TC 1.A.6) family. ASIC1 subfamily. In terms of assembly, forms functional homotrimeric channels. Forms heterotrimers with other ASIC proteins, resulting in channels with distinct properties. Interacts with PICK1; regulates ASIC1 clustering in membranes. Interacts with STOM; alters heterotrimeric channels activity. Post-translationally, pH-gating could be regulated by serine proteases. In terms of processing, phosphorylation by PKA regulates interaction with PICK1 and subcellular localization. Phosphorylation by PKC may regulate the channel. In terms of tissue distribution, expressed in neurons throughout the central and peripheral nervous system.

Its subcellular location is the cell membrane. It is found in the postsynaptic cell membrane. It localises to the cell projection. The protein resides in the dendrite. It carries out the reaction Na(+)(in) = Na(+)(out). The enzyme catalyses K(+)(in) = K(+)(out). It catalyses the reaction Li(+)(in) = Li(+)(out). The catalysed reaction is Ca(2+)(in) = Ca(2+)(out). With respect to regulation, potentiated by FMRFamide-related neuropeptides, which are induced during inflammation and modulate pain responses. Inhibited by the diuretic drug amiloride. Spider venom psalmotoxin-1 inhibits the channel by locking it in its desensitized conformation. The homotrimeric channel is inhibited by the spider venom pi-theraphotoxin-Hm3a. Homotrimeric and heterotrimeric (with ASIC2 isoform 1) channels are inhibited by the snake venom mambalgin-1, which prevents proton-induced transitions from the resting closed state to the active and/or desensitized states. Inhibited by Texas coral snake toxin MitTx1. Functionally, forms voltage-independent, pH-gated trimeric sodium channels that act as postsynaptic excitatory receptors in the nervous system, playing a crucial role in regulating synaptic plasticity, learning, and memory. Upon extracellular pH drop this channel elicits transient, fast activating, and completely desensitizing inward currents. Displays high selectivity for sodium ions but can also permit the permeation of other cations. Regulates more or less directly intracellular calcium concentration and CaMKII phosphorylation, and thereby the density of dendritic spines. Modulates neuronal activity in the circuits underlying innate fear. Its function is as follows. Has high selectivity for sodium ions, but can also be permeable to other cations including calcium, lithium and potassium. Produces acid activated currents with a reduced amplitude and inactivates faster. Has high selectivity for sodium ions but also supports a calcium-mediated current which is sustained and maintained as long as acidic conditions are present. Also potentially permeable to lithium and potassium. In terms of biological role, has no measurable proton-gated sodium channel activity in vitro. The chain is Acid-sensing ion channel 1 from Homo sapiens (Human).